A 461-amino-acid chain; its full sequence is tRNA modification GTPase MnmE (461 aa).

(6S)-5-formyl-5,6,7,8-tetrahydrofolate is bound by residues R27, E89, and R128. Positions G224–F382 constitute a TrmE-type G domain. Position 234 (N234) interacts with K(+). Residues N234–S239, T253–T259, and D278–G281 contribute to the GTP site. Residue S238 coordinates Mg(2+). K(+)-binding residues include T253, V255, and T258. Position 259 (T259) interacts with Mg(2+). A (6S)-5-formyl-5,6,7,8-tetrahydrofolate-binding site is contributed by K461.

The protein belongs to the TRAFAC class TrmE-Era-EngA-EngB-Septin-like GTPase superfamily. TrmE GTPase family. Homodimer. Heterotetramer of two MnmE and two MnmG subunits. The cofactor is K(+).

Its subcellular location is the cytoplasm. Its function is as follows. Exhibits a very high intrinsic GTPase hydrolysis rate. Involved in the addition of a carboxymethylaminomethyl (cmnm) group at the wobble position (U34) of certain tRNAs, forming tRNA-cmnm(5)s(2)U34. This chain is tRNA modification GTPase MnmE, found in Lactobacillus helveticus (strain DPC 4571).